A 315-amino-acid polypeptide reads, in one-letter code: Prephenate dehydratase (315 aa).

Residues 3–189 (RIAYLGPEGT…ARTRFVLVGP (187 aa)) form the Prephenate dehydratase domain. The ACT domain maps to 203–280 (SVVLRIDNAP…ADVRYLGSWP (78 aa)).

As to quaternary structure, homodimer.

It catalyses the reaction prephenate + H(+) = 3-phenylpyruvate + CO2 + H2O. It functions in the pathway amino-acid biosynthesis; L-phenylalanine biosynthesis; phenylpyruvate from prephenate: step 1/1. This Mycobacterium avium (strain 104) protein is Prephenate dehydratase (pheA).